A 232-amino-acid polypeptide reads, in one-letter code: MPKRTTHTYSSEDAAPDGPDSDLFVYYCKHCGSHVLITDTQLQKMPKRKTDRSNVLDKKTHLARLNVSEGGKVLLKRGEGKMERQFRMNCIGCELFVCYRAEENLETASFIYIVDGALSAVAAETNPQDAPVPPCISQLDGGLVQVAIEVEDRAQRSAITRVNADDVRVTVAAPAARGEANNELLEFMGRVLGLRLSQMTLQRGWNSKSKLLVVEDLSARQVYEKLLEAVVP.

Belongs to the UPF0235 family. As to quaternary structure, interacts with CTN.

Its subcellular location is the nucleus speckle. Functionally, may play a role during early embryonic development. Probably involved in pre-mRNA splicing. This chain is UPF0235 protein At5g63440, found in Arabidopsis thaliana (Mouse-ear cress).